We begin with the raw amino-acid sequence, 692 residues long: MAREFSLKDTRNIGIMAHIDAGKTTTTERILFYTGRVHKIGETHEGASQMDWMEQEQERGITITSAATTAQWKGHRINIIDTPGHVDFTVEVERSLRVLDGAVAVLDAQSGVEPQTETVWRQATTYGVPRIVFINKMDKTGADFMYSVSTLRDRLQANAHPIQLPIGAEDDFVGFVDLIEMQAHISKDDLGQDWEVTEVPADYKDEAESLRESLVEAVAELDEDLMMKYLEGEELTKDELKAAIRKGTCNVEFYPVVCGTAFKNKGVQALLDAVLDYLPSPLDVAAIRGQVPGTDEEVTREPGDDQPFAALAFKVMTDPFVGKLTFFRVYSGTLNSGSYVRNATKDKRERIGRILQMHANSREEISTVYSGDIAAAVGLKDTTTGDTLCDEKNLVILESMEFPEPVIHLSVEPKSKADQDKMGIALAKLAEEDPTFKTFTDEETGETVIGGMGELHLDIIVDRLRREFKVEANVGAPQVSYRETIRTAAQVEGKFVRQSGGRGQFGHVWVEFSPNEEGAGFEFENAIVGGVVPREYIPSVQAGIEEALQNGMIAGYPVIDIKAKLYDGSYHDVDSSEMAFKIAASMALKNAKSKCDPVLLEPISKVEIVVPEEYMGDIMGDVTARRGRVEGMEARGNAQVVKAFVPLAEMFGYATSLRSRTQGRGTYSMVFDHYEEVPKSIAEEIIKKQTGA.

One can recognise a tr-type G domain in the interval 8–282; it reads KDTRNIGIMA…AVLDYLPSPL (275 aa). GTP is bound by residues 17 to 24, 81 to 85, and 135 to 138; these read AHIDAGKT, DTPGH, and NKMD.

Belongs to the TRAFAC class translation factor GTPase superfamily. Classic translation factor GTPase family. EF-G/EF-2 subfamily.

It is found in the cytoplasm. Functionally, catalyzes the GTP-dependent ribosomal translocation step during translation elongation. During this step, the ribosome changes from the pre-translocational (PRE) to the post-translocational (POST) state as the newly formed A-site-bound peptidyl-tRNA and P-site-bound deacylated tRNA move to the P and E sites, respectively. Catalyzes the coordinated movement of the two tRNA molecules, the mRNA and conformational changes in the ribosome. This Shouchella clausii (strain KSM-K16) (Alkalihalobacillus clausii) protein is Elongation factor G.